Here is a 117-residue protein sequence, read N- to C-terminus: uncharacterized protein (117 aa).

A helical membrane pass occupies residues 76–96; it reads FIMSSGCFLIASLSCVGLTVF.

Its subcellular location is the membrane. This is an uncharacterized protein from Saccharomyces cerevisiae (strain ATCC 204508 / S288c) (Baker's yeast).